A 607-amino-acid polypeptide reads, in one-letter code: Elongation factor 4 (607 aa).

Residues 11–193 form the tr-type G domain; sequence KNIRNFSIIA…KIVETIPAPS (183 aa). Residues 23 to 28 and 140 to 143 each bind GTP; these read DHGKST and NKID.

The protein belongs to the TRAFAC class translation factor GTPase superfamily. Classic translation factor GTPase family. LepA subfamily.

The protein resides in the cell membrane. The catalysed reaction is GTP + H2O = GDP + phosphate + H(+). Functionally, required for accurate and efficient protein synthesis under certain stress conditions. May act as a fidelity factor of the translation reaction, by catalyzing a one-codon backward translocation of tRNAs on improperly translocated ribosomes. Back-translocation proceeds from a post-translocation (POST) complex to a pre-translocation (PRE) complex, thus giving elongation factor G a second chance to translocate the tRNAs correctly. Binds to ribosomes in a GTP-dependent manner. The protein is Elongation factor 4 of Staphylococcus carnosus (strain TM300).